A 473-amino-acid chain; its full sequence is Alliin lyase 2 (473 aa).

Positions 1–15 (MICLVILTCIIMSNS) are cleaved as a signal peptide. Positions 16 to 25 (FVNNNNMVQA) are excised as a propeptide. Residues 38–84 (EAVANINCSEHGRAFLDGIISEGSPKCECNTCYTGPDCSEKIQGCSA) form the EGF-like; atypical domain. A glycan (N-linked (GlcNAc...) asparagine) is linked at Asn-44. Disulfide bonds link Cys-45/Cys-64, Cys-66/Cys-75, and Cys-69/Cys-82. 117-125 (YFFNPVSNF) lines the chloride pocket. Asn-171 and Asn-216 each carry an N-linked (GlcNAc...) asparagine glycan. An N6-(pyridoxal phosphate)lysine modification is found at Lys-276. A glycan (N-linked (GlcNAc...) asparagine) is linked at Asn-353. A disulfide bond links Cys-393 and Cys-401.

The protein belongs to the alliinase family. Homodimer. Pyridoxal 5'-phosphate serves as cofactor. In terms of processing, glycosylated. High expression in bulbs, lower expression in leaves, and no expression in roots.

Its subcellular location is the vacuole. It catalyses the reaction an S-alkyl-L-cysteine S-oxide = an S-alkyl sulfenate + 2-aminoprop-2-enoate. It carries out the reaction alliin = allylsulfenate + 2-aminoprop-2-enoate. Able to cleave the C-S bond of sulfoxide derivatives of Cys to produce allicin, thus giving rise to all sulfur compounds which are responsible for most of the properties of garlic, such as the specific smell and flavor as well as the health benefits like blood lipid or blood pressure lowering. The sequence is that of Alliin lyase 2 from Allium sativum (Garlic).